The chain runs to 289 residues: Inorganic pyrophosphatase (289 aa).

At serine 2 the chain carries N-acetylserine. Lysine 57 is modified (N6-acetyllysine). Positions 116, 121, and 153 each coordinate Mg(2+). Position 250 is a phosphoserine (serine 250).

Belongs to the PPase family. As to quaternary structure, homodimer. Requires Mg(2+) as cofactor. In terms of processing, the N-terminus is blocked. In terms of tissue distribution, highest levels are found in retinal rod outer segments.

Its subcellular location is the cytoplasm. It catalyses the reaction diphosphate + H2O = 2 phosphate + H(+). This is Inorganic pyrophosphatase (PPA1) from Bos taurus (Bovine).